The sequence spans 484 residues: Protein nucleotidyltransferase YdiU (484 aa).

Residues Gly-81, Gly-83, Arg-84, Lys-103, Asp-115, Gly-116, Arg-166, and Arg-173 each contribute to the ATP site. Residue Asp-244 is the Proton acceptor of the active site. Residues Asn-245 and Asp-254 each coordinate Mg(2+). Asp-254 contacts ATP.

It belongs to the SELO family. Mg(2+) is required as a cofactor. Requires Mn(2+) as cofactor.

It carries out the reaction L-seryl-[protein] + ATP = 3-O-(5'-adenylyl)-L-seryl-[protein] + diphosphate. It catalyses the reaction L-threonyl-[protein] + ATP = 3-O-(5'-adenylyl)-L-threonyl-[protein] + diphosphate. The enzyme catalyses L-tyrosyl-[protein] + ATP = O-(5'-adenylyl)-L-tyrosyl-[protein] + diphosphate. The catalysed reaction is L-histidyl-[protein] + UTP = N(tele)-(5'-uridylyl)-L-histidyl-[protein] + diphosphate. It carries out the reaction L-seryl-[protein] + UTP = O-(5'-uridylyl)-L-seryl-[protein] + diphosphate. It catalyses the reaction L-tyrosyl-[protein] + UTP = O-(5'-uridylyl)-L-tyrosyl-[protein] + diphosphate. In terms of biological role, nucleotidyltransferase involved in the post-translational modification of proteins. It can catalyze the addition of adenosine monophosphate (AMP) or uridine monophosphate (UMP) to a protein, resulting in modifications known as AMPylation and UMPylation. The sequence is that of Protein nucleotidyltransferase YdiU from Shewanella sp. (strain MR-7).